The primary structure comprises 581 residues: Proline--tRNA ligase (581 aa).

This sequence belongs to the class-II aminoacyl-tRNA synthetase family. ProS type 1 subfamily. As to quaternary structure, homodimer.

The protein resides in the cytoplasm. The catalysed reaction is tRNA(Pro) + L-proline + ATP = L-prolyl-tRNA(Pro) + AMP + diphosphate. Functionally, catalyzes the attachment of proline to tRNA(Pro) in a two-step reaction: proline is first activated by ATP to form Pro-AMP and then transferred to the acceptor end of tRNA(Pro). As ProRS can inadvertently accommodate and process non-cognate amino acids such as alanine and cysteine, to avoid such errors it has two additional distinct editing activities against alanine. One activity is designated as 'pretransfer' editing and involves the tRNA(Pro)-independent hydrolysis of activated Ala-AMP. The other activity is designated 'posttransfer' editing and involves deacylation of mischarged Ala-tRNA(Pro). The misacylated Cys-tRNA(Pro) is not edited by ProRS. This Verminephrobacter eiseniae (strain EF01-2) protein is Proline--tRNA ligase.